A 634-amino-acid chain; its full sequence is Frizzled and smoothened-like protein D (634 aa).

A signal peptide spans 1 to 21; sequence MINKFKFYLIFLKLILILVNC. The Extracellular segment spans residues 22–257; it reads QNSLNDYGFG…QMDSVINMSK (236 aa). Positions 34–178 constitute an FZ domain; it reads DESSICTSYI…LTKYGYTANG (145 aa). N-linked (GlcNAc...) asparagine glycans are attached at residues asparagine 126, asparagine 168, asparagine 215, asparagine 243, and asparagine 254. A helical membrane pass occupies residues 258 to 278; it reads AMSSISFVLSLFNVITFGLLI. Over 279–287 the chain is Cytoplasmic; sequence KKKSKYNVC. A helical membrane pass occupies residues 288-308; it reads IALMAIGSSFIYLSDIINYGV. Residues 309 to 335 lie on the Extracellular side of the membrane; that stretch reads GIEKQLCPEPGRVATQRVDSLCGFTGS. Residues 336 to 356 traverse the membrane as a helical segment; it reads IFHIGITLCVLWSMTMGIVLY. The Cytoplasmic portion of the chain corresponds to 357–368; that stretch reads SKIKQFKLPNFR. Residues 369–389 traverse the membrane as a helical segment; the sequence is YFLIGNLSFTVVTLIILASAK. Residues 390-410 lie on the Extracellular side of the membrane; the sequence is KFQGGNGFLECWMRDRWYVVA. The helical transmembrane segment at 411–431 threads the bilayer; the sequence is IFWIPCGIALLLGVLSICGVI. The Cytoplasmic segment spans residues 432 to 454; it reads FEIYKISKNVSLKDSKVVIRELK. A helical transmembrane segment spans residues 455–475; it reads PFVLVVTVSASLIYLFVFYFD. Topologically, residues 476 to 513 are extracellular; the sequence is SESKYDFYKKGVEDYILCLLTSENPLDECYTVGPNFNS. The chain crosses the membrane as a helical span at residues 514–534; that stretch reads YFMFYFLIRFFGILFFGIFGT. Residues 535-634 lie on the Cytoplasmic side of the membrane; sequence SEIARNAWTE…MEIELDSIDI (100 aa). The tract at residues 560-624 is disordered; it reads VSSSTRGGGG…NNNNNDNNNK (65 aa). 2 stretches are compositionally biased toward low complexity: residues 572-592 and 609-622; these read SGIK…NNST and DNTI…NDNN.

It belongs to the G-protein coupled receptor Fz/Smo family.

It localises to the membrane. The chain is Frizzled and smoothened-like protein D (fslD) from Dictyostelium discoideum (Social amoeba).